Consider the following 772-residue polypeptide: Glucocorticoid receptor (772 aa).

A compositionally biased stretch (basic and acidic residues) spans 1–15; sequence MDSKESLSPPGREEV. The tract at residues 1–22 is disordered; sequence MDSKESLSPPGREEVPSSVLRP. Residues 1–415 form a modulating region; the sequence is MDSKESLSPP…TTAAGPPPKL (415 aa). R25 carries the omega-N-methylarginine modification. The segment at 39–82 is disordered; sequence APVRVPASSPSLAPAAQPDSKQQRLAVDFPKGSASNAQQPDLSR. Residues 44–58 are compositionally biased toward low complexity; sequence PASSPSLAPAAQPDS. A phosphoserine mark is found at S47, S115, S136, and S143. The segment at 132–186 is disordered; that stretch reads NRSASGADNPRSTAPAAGSAAPTEGFPKTHSDLASERQNPKGQTGGSAGSAKLHP. Over residues 143-156 the composition is skewed to low complexity; sequence STAPAAGSAAPTEG. Over residues 158-170 the composition is skewed to basic and acidic residues; that stretch reads PKTHSDLASERQN. Phosphoserine is present on residues S203, S211, and S226. A Glycyl lysine isopeptide (Lys-Gly) (interchain with G-Cter in SUMO2) cross-link involves residue K258. Glycyl lysine isopeptide (Lys-Gly) (interchain with G-Cter in SUMO); alternate cross-links involve residues K277 and K293. Glycyl lysine isopeptide (Lys-Gly) (interchain with G-Cter in SUMO2); alternate cross-links involve residues K277 and K293. Phosphoserine occurs at positions 307 and 400. Residue K414 forms a Glycyl lysine isopeptide (Lys-Gly) (interchain with G-Cter in ubiquitin) linkage. 2 NR C4-type zinc fingers span residues 416-436 and 452-476; these read CLVCSDEASGCHYGVLTCGSC and CAGRNDCIIDKIRRKNCPACRYRKC. A DNA-binding region (nuclear receptor) is located at residues 416-481; it reads CLVCSDEASG…RYRKCLQAGM (66 aa). An N6-acetyllysine mark is found at K475, K487, K489, and K490. The interval 480 to 772 is interaction with CLOCK; that stretch reads GMNLEARKTK…NIKKLLFHQK (293 aa). Residues 482–518 form a hinge region; that stretch reads NLEARKTKKKIKGIQQTSTGVSQETSENPSNRTVVPA. Positions 494–513 are disordered; that stretch reads GIQQTSTGVSQETSENPSNR. The segment covering 499–513 has biased composition (polar residues); it reads STGVSQETSENPSNR. Positions 519-753 constitute an NR LBD domain; sequence ALPQLTPTLV…FPEMLAEIIT (235 aa). Positions 527 to 692 are interaction with CRY1; that stretch reads LVSLLEVIEP…EIRMTYIKEL (166 aa). K698 is covalently cross-linked (Glycyl lysine isopeptide (Lys-Gly) (interchain with G-Cter in SUMO)).

The protein belongs to the nuclear hormone receptor family. NR3 subfamily. Heteromultimeric cytoplasmic complex with HSP90AA1, HSPA1A/HSPA1B, and FKBP5 or another immunophilin such as PPID, STIP1, or the immunophilin homolog PPP5C. Upon ligand binding FKBP5 dissociates from the complex and FKBP4 takes its place, thereby linking the complex to dynein and mediating transport to the nucleus, where the complex dissociates. Probably forms a complex composed of chaperones HSP90 and HSP70, co-chaperones CDC37, PPP5C, TSC1 and client protein TSC2, CDK4, AKT, RAF1 and NR3C1; this complex does not contain co-chaperones STIP1/HOP and PTGES3/p23. Directly interacts with UNC45A. Binds to DNA as a homodimer, and as heterodimer with NR3C2 or the retinoid X receptor. Binds STAT5A and STAT5B homodimers and heterodimers. Interacts with NRIP1, POU2F1, POU2F2 and TRIM28. Interacts with several coactivator complexes, including the SMARCA4 complex, CREBBP/EP300, TADA2L (Ada complex) and p160 coactivators such as NCOA2 and NCOA6. Interaction with BAG1 inhibits transactivation. Interacts with HEXIM1 and TGFB1I1. Interacts with NCOA1. Interacts with NCOA3, SMARCA4, SMARCC1, SMARCD1, and SMARCE1. Interacts with CLOCK, CRY1 and CRY2 in a ligand-dependent fashion. Interacts with CIART. Interacts with RWDD3. Interacts with UBE2I/UBC9 and this interaction is enhanced in the presence of RWDD3. Interacts with GRIP1. Interacts with NR4A3 (via nuclear receptor DNA-binding domain), represses transcription activity of NR4A3 on the POMC promoter Nur response element (NurRE). Directly interacts with PNRC2 to attract and form a complex with UPF1 and DCP1A; the interaction leads to rapid mRNA degradation. Interacts with GSK3B. Interacts with FNIP1 and FNIP2. Interacts (via C-terminus) with HNRNPU (via C-terminus). Interacts with MCM3AP. Interacts (via domain NR LBD) with HSP90AA1 and HSP90AB1. In the absence of hormonal ligand, interacts with TACC1. Interacts (via NR LBD domain) with ZNF764 (via KRAB domain); the interaction regulates transcription factor activity of NR3C1 by directing its actions toward certain biologic pathways. In terms of processing, acetylation by CLOCK reduces its binding to glucocorticoid response elements and its transcriptional activity. Post-translationally, increased proteasome-mediated degradation in response to glucocorticoids. Phosphorylated in the absence of hormone; becomes hyperphosphorylated in the presence of glucocorticoid. The Ser-203, Ser-226 and Ser-399-phosphorylated forms are mainly cytoplasmic, and the Ser-211-phosphorylated form is nuclear. Phosphorylation at Ser-211 increases transcriptional activity. Phosphorylation at Ser-203, Ser-226 and Ser-399 decreases signaling capacity. Phosphorylation at Ser-399 may protect from glucocorticoid-induced apoptosis. Phosphorylation at Ser-203 and Ser-211 is not required in regulation of chromosome segregation. May be dephosphorylated by PPP5C, attenuates NR3C1 action. In terms of processing, ubiquitinated by UBR5, leading to its degradation: UBR5 specifically recognizes and binds ligand-bound NR3C1 when it is not associated with coactivators (NCOAs). In presence of NCOAs, the UBR5-degron is not accessible, preventing its ubiquitination and degradation. Post-translationally, sumoylation at Lys-277 and Lys-293 negatively regulates its transcriptional activity. Sumoylation at Lys-698 positively regulates its transcriptional activity in the presence of RWDD3. Sumoylation at Lys-277 and Lys-293 is dispensable whereas sumoylation at Lys-698 is critical for the stimulatory effect of RWDD3 on its transcriptional activity. Heat shock increases sumoylation in a RWDD3-dependent manner.

The protein localises to the cytoplasm. It localises to the nucleus. Its subcellular location is the mitochondrion. The protein resides in the cytoskeleton. It is found in the spindle. The protein localises to the microtubule organizing center. It localises to the centrosome. Its subcellular location is the chromosome. The protein resides in the nucleoplasm. Receptor for glucocorticoids (GC). Has a dual mode of action: as a transcription factor that binds to glucocorticoid response elements (GRE), both for nuclear and mitochondrial DNA, and as a modulator of other transcription factors. Affects inflammatory responses, cellular proliferation and differentiation in target tissues. Involved in chromatin remodeling. Plays a role in rapid mRNA degradation by binding to the 5' UTR of target mRNAs and interacting with PNRC2 in a ligand-dependent manner which recruits the RNA helicase UPF1 and the mRNA-decapping enzyme DCP1A, leading to RNA decay. Could act as a coactivator for STAT5-dependent transcription upon growth hormone (GH) stimulation and could reveal an essential role of hepatic GR in the control of body growth. Mediates glucocorticoid-induced apoptosis. Promotes accurate chromosome segregation during mitosis. May act as a tumor suppressor. May play a negative role in adipogenesis through the regulation of lipolytic and antilipogenic gene expression. This is Glucocorticoid receptor (NR3C1) from Oryctolagus cuniculus (Rabbit).